A 452-amino-acid polypeptide reads, in one-letter code: Chromosomal replication initiator protein DnaA (452 aa).

Residues 1 to 72 (MPDMLTLWTD…LVEYAYQAAH (72 aa)) are domain I, interacts with DnaA modulators. The interval 72–114 (HEDIQPVLILENERQQQATLKAKTAPVAAGEPVEPTPTFMKET) is domain II. The domain III, AAA+ region stretch occupies residues 115–331 (ALNSRYTFDT…GALARVQAYS (217 aa)). The ATP site is built by Gly159, Gly161, Lys162, and Thr163. A domain IV, binds dsDNA region spans residues 332-452 (QLMHQPIATD…IDSLKDDLRR (121 aa)).

This sequence belongs to the DnaA family. In terms of assembly, oligomerizes as a right-handed, spiral filament on DNA at oriC.

It is found in the cytoplasm. Plays an essential role in the initiation and regulation of chromosomal replication. ATP-DnaA binds to the origin of replication (oriC) to initiate formation of the DNA replication initiation complex once per cell cycle. Binds the DnaA box (a 9 base pair repeat at the origin) and separates the double-stranded (ds)DNA. Forms a right-handed helical filament on oriC DNA; dsDNA binds to the exterior of the filament while single-stranded (ss)DNA is stabiized in the filament's interior. The ATP-DnaA-oriC complex binds and stabilizes one strand of the AT-rich DNA unwinding element (DUE), permitting loading of DNA polymerase. After initiation quickly degrades to an ADP-DnaA complex that is not apt for DNA replication. Binds acidic phospholipids. In Levilactobacillus brevis (strain ATCC 367 / BCRC 12310 / CIP 105137 / JCM 1170 / LMG 11437 / NCIMB 947 / NCTC 947) (Lactobacillus brevis), this protein is Chromosomal replication initiator protein DnaA.